Here is a 235-residue protein sequence, read N- to C-terminus: Phosphoribosylaminoimidazole-succinocarboxamide synthase (235 aa).

Belongs to the SAICAR synthetase family.

It carries out the reaction 5-amino-1-(5-phospho-D-ribosyl)imidazole-4-carboxylate + L-aspartate + ATP = (2S)-2-[5-amino-1-(5-phospho-beta-D-ribosyl)imidazole-4-carboxamido]succinate + ADP + phosphate + 2 H(+). It participates in purine metabolism; IMP biosynthesis via de novo pathway; 5-amino-1-(5-phospho-D-ribosyl)imidazole-4-carboxamide from 5-amino-1-(5-phospho-D-ribosyl)imidazole-4-carboxylate: step 1/2. In Thermococcus kodakarensis (strain ATCC BAA-918 / JCM 12380 / KOD1) (Pyrococcus kodakaraensis (strain KOD1)), this protein is Phosphoribosylaminoimidazole-succinocarboxamide synthase.